The primary structure comprises 289 residues: Dermonecrotic toxin LarSicTox-betaID1 (289 aa).

An N-terminal signal peptide occupies residues 1–2; sequence EG. The propeptide occupies 3–11; that stretch reads AEQDGSERT. Histidine 22 is a catalytic residue. The Mg(2+) site is built by glutamate 42 and aspartate 44. Histidine 58 (nucleophile) is an active-site residue. Cystine bridges form between cysteine 62–cysteine 68 and cysteine 64–cysteine 207. Aspartate 102 lines the Mg(2+) pocket.

It belongs to the arthropod phospholipase D family. Class II subfamily. It depends on Mg(2+) as a cofactor. Expressed by the venom gland.

It localises to the secreted. The catalysed reaction is an N-(acyl)-sphingosylphosphocholine = an N-(acyl)-sphingosyl-1,3-cyclic phosphate + choline. It carries out the reaction N-hexanoyl-sphing-4-enine-1-phosphocholine = N-(hexanoyl)-sphing-4-enine-1,3-cyclic phosphate + choline. The enzyme catalyses N-(dodecanoyl)-sphing-4-enine-1-phosphocholine = N-dodecanoyl-sphing-4-enine-1,3-cyclic phosphate + choline. It catalyses the reaction an N-(acyl)-sphingosylphosphoethanolamine = an N-(acyl)-sphingosyl-1,3-cyclic phosphate + ethanolamine. The catalysed reaction is N-dodecanoyl-heptadecasphing-4-enine-1-phosphoethanolamine = N-dodecanoyl-heptadecasphing-4-enine-1,3-cyclic phosphate + ethanolamine. It carries out the reaction a 1-acyl-sn-glycero-3-phosphocholine = a 1-acyl-sn-glycero-2,3-cyclic phosphate + choline. The enzyme catalyses 1-tetradecanoyl-sn-glycero-3-phosphocholine = 1-tetradecanoyl-sn-glycero-2,3-cyclic phosphate + choline. It catalyses the reaction 1-octanoyl-sn-glycero-3-phosphocholine = 1-octanoyl-sn-glycero-2,3-cyclic phosphate + choline. The catalysed reaction is a 1-acyl-sn-glycero-3-phosphoethanolamine = a 1-acyl-sn-glycero-2,3-cyclic phosphate + ethanolamine. It carries out the reaction 1-tetradecanoyl-sn-glycero-3-phosphoethanolamine = 1-tetradecanoyl-sn-glycero-2,3-cyclic phosphate + ethanolamine. Its function is as follows. Dermonecrotic toxins cleave the phosphodiester linkage between the phosphate and headgroup of certain phospholipids (sphingolipid and lysolipid substrates), forming an alcohol (often choline) and a cyclic phosphate. This toxin acts on sphingomyelin (SM) and on ceramide phosphoethanolamine (CPE) with high activity. It also acts on lysophosphatidylcholine (LPC) and on lysophosphatidylethanolamine (LPE) with moderate activity. It is not active on lysophosphatidylserine (LPS), and lysophosphatidylglycerol (LPG). It acts by transphosphatidylation, releasing exclusively cyclic phosphate as second products. It is not surprising that spider toxins have affinity for ethanolamine-containing sphingolipids since they are common in insect prey. On mammals, induces dermonecrosis, hemolysis, increased vascular permeability, edema, inflammatory response, and platelet aggregation. In Loxosceles arizonica (Arizona brown spider), this protein is Dermonecrotic toxin LarSicTox-betaID1.